The sequence spans 67 residues: Small ribosomal subunit protein eS31 (67 aa).

Positions 31, 34, 49, and 52 each coordinate Zn(2+). Residues 31–52 form a C4-type zinc finger; that stretch reads CPKCGAGVFMAEHLNRFACGKC.

This sequence belongs to the eukaryotic ribosomal protein eS31 family. Part of the 30S ribosomal subunit. It depends on Zn(2+) as a cofactor.

The sequence is that of Small ribosomal subunit protein eS31 from Methanococcus maripaludis (strain C5 / ATCC BAA-1333).